Consider the following 151-residue polypeptide: Transcriptional repressor NrdR (151 aa).

A zinc finger lies at 3–34 (CPFCNAQDTKVIDSRLVSEGSQVRRRRSCNEC). The region spanning 49–139 (PRLIKSDGRR…VYRSFKDVKE (91 aa)) is the ATP-cone domain.

This sequence belongs to the NrdR family. Zn(2+) is required as a cofactor.

Its function is as follows. Negatively regulates transcription of bacterial ribonucleotide reductase nrd genes and operons by binding to NrdR-boxes. This Psychromonas ingrahamii (strain DSM 17664 / CCUG 51855 / 37) protein is Transcriptional repressor NrdR.